The chain runs to 524 residues: Chitinase D (524 aa).

A signal peptide spans 1–30 (MNQAVRFRPVITFALAFILIITWFAPRADA). Residues 95–180 (VPAGLTSSLV…TSLSVTTSTG (86 aa)) enclose the Fibronectin type-III domain. Positions 190-514 (KWLIGYWHNF…NAHRPFLNGL (325 aa)) constitute a GH18 domain. E303 acts as the Proton donor in catalysis.

Belongs to the glycosyl hydrolase 18 family. Chitinase class II subfamily.

It carries out the reaction Random endo-hydrolysis of N-acetyl-beta-D-glucosaminide (1-&gt;4)-beta-linkages in chitin and chitodextrins.. This chain is Chitinase D (chiD), found in Niallia circulans (Bacillus circulans).